The following is a 255-amino-acid chain: Putative glycyl-radical enzyme activating enzyme MJ1632 (255 aa).

Residues 30–245 form the Radical SAM core domain; the sequence is SHISLSDKIT…SNVSCSLDFK (216 aa). [4Fe-4S] cluster contacts are provided by C45, C49, and C52. S-adenosyl-L-methionine-binding positions include 51-53, G88, and 134-136; these read YCF and DLK.

The protein belongs to the organic radical-activating enzymes family. It depends on [4Fe-4S] cluster as a cofactor.

The catalysed reaction is glycyl-[protein] + reduced [flavodoxin] + S-adenosyl-L-methionine = glycin-2-yl radical-[protein] + semiquinone [flavodoxin] + 5'-deoxyadenosine + L-methionine + H(+). This is Putative glycyl-radical enzyme activating enzyme MJ1632 from Methanocaldococcus jannaschii (strain ATCC 43067 / DSM 2661 / JAL-1 / JCM 10045 / NBRC 100440) (Methanococcus jannaschii).